We begin with the raw amino-acid sequence, 92 residues long: Small ribosomal subunit protein uS19 (92 aa).

Belongs to the universal ribosomal protein uS19 family.

Functionally, protein S19 forms a complex with S13 that binds strongly to the 16S ribosomal RNA. This chain is Small ribosomal subunit protein uS19, found in Vibrio campbellii (strain ATCC BAA-1116).